Consider the following 152-residue polypeptide: Cell division protein SepF (152 aa).

The protein belongs to the SepF family. In terms of assembly, homodimer. Interacts with FtsZ.

It localises to the cytoplasm. In terms of biological role, cell division protein that is part of the divisome complex and is recruited early to the Z-ring. Probably stimulates Z-ring formation, perhaps through the cross-linking of FtsZ protofilaments. Its function overlaps with FtsA. The chain is Cell division protein SepF from Clostridioides difficile (strain 630) (Peptoclostridium difficile).